The sequence spans 220 residues: Ribosomal RNA small subunit methyltransferase Nep1 (220 aa).

Residues glycine 178, glycine 183, and 196 to 201 each bind S-adenosyl-L-methionine; that span reads LYREPL.

Belongs to the class IV-like SAM-binding methyltransferase superfamily. RNA methyltransferase NEP1 family. Homodimer.

The enzyme catalyses a pseudouridine in rRNA + S-adenosyl-L-methionine = an N(1)-methylpseudouridine in rRNA + S-adenosyl-L-homocysteine + H(+). Functionally, methyltransferase involved in ribosomal biogenesis. Specifically catalyzes the N1-methylation of the pseudouridine corresponding to position 914 in M.jannaschii 16S rRNA. The polypeptide is Ribosomal RNA small subunit methyltransferase Nep1 (Thermococcus kodakarensis (strain ATCC BAA-918 / JCM 12380 / KOD1) (Pyrococcus kodakaraensis (strain KOD1))).